The following is a 152-amino-acid chain: UPF0266 membrane protein YobD (152 aa).

The next 3 membrane-spanning stretches (helical) occupy residues leucine 6 to methionine 26, isoleucine 45 to histidine 65, and alanine 67 to isoleucine 87.

The protein belongs to the UPF0266 family.

It localises to the cell inner membrane. This Escherichia coli O157:H7 (strain EC4115 / EHEC) protein is UPF0266 membrane protein YobD.